Reading from the N-terminus, the 207-residue chain is Large ribosomal subunit protein uL4 (207 aa).

Belongs to the universal ribosomal protein uL4 family. As to quaternary structure, part of the 50S ribosomal subunit.

One of the primary rRNA binding proteins, this protein initially binds near the 5'-end of the 23S rRNA. It is important during the early stages of 50S assembly. It makes multiple contacts with different domains of the 23S rRNA in the assembled 50S subunit and ribosome. In terms of biological role, forms part of the polypeptide exit tunnel. This chain is Large ribosomal subunit protein uL4, found in Rickettsia conorii (strain ATCC VR-613 / Malish 7).